The chain runs to 532 residues: UDP-glucuronosyltransferase 1A4 (532 aa).

Positions 1–27 are cleaved as a signal peptide; the sequence is MVLGVWITLWRLVRLLLLLCVLPWAEG. N-linked (GlcNAc...) asparagine glycans are attached at residues Asn-141 and Asn-295. Residues 490-506 traverse the membrane as a helical segment; sequence VIGFLLAIVLTVAFVTF.

Belongs to the UDP-glycosyltransferase family. As to quaternary structure, homodimers. Homooligomer. Interacts with UGT1A1, UGT1A3, UGT1A6, UGT1A7, UGT1A8, UGT1A9 and UGT1A10 to form heterodimers.

Its subcellular location is the endoplasmic reticulum membrane. The enzyme catalyses glucuronate acceptor + UDP-alpha-D-glucuronate = acceptor beta-D-glucuronoside + UDP + H(+). The catalysed reaction is calcidiol + UDP-alpha-D-glucuronate = calcidiol 25-O-(beta-D-glucuronide) + UDP + H(+). It catalyses the reaction calcidiol + UDP-alpha-D-glucuronate = calcidiol 3-O-(beta-D-glucuronide) + UDP + H(+). It carries out the reaction calcitriol + UDP-alpha-D-glucuronate = calcitriol 25-O-(beta-D-glucuronide) + UDP + H(+). The enzyme catalyses (5Z,8Z,11Z,14Z)-eicosatetraenoate + UDP-alpha-D-glucuronate = O-[(5Z),(8Z),(11Z),(14Z)-eicosatetraenoyl]-beta-D-glucuronate + UDP. The catalysed reaction is 15-hydroxy-(5Z,8Z,11Z,13E)-eicosatetraenoate + UDP-alpha-D-glucuronate = 15-O-(beta-D-glucuronosyl)-(5Z,8Z,11Z,14Z)-eicosatetraenoate + UDP + H(+). It catalyses the reaction 20-hydroxy-(5Z,8Z,11Z,14Z)-eicosatetraenoate + UDP-alpha-D-glucuronate = 20-O-(beta-D-glucuronosyl)-(5Z,8Z,11Z,14Z)-eicosatetraenoate + UDP + H(+). UDP-glucuronosyltransferase (UGT) that catalyzes phase II biotransformation reactions in which lipophilic substrates are conjugated with glucuronic acid to increase the metabolite's water solubility, thereby facilitating excretion into either the urine or bile. Essential for the elimination and detoxification of drugs, xenobiotics and endogenous compounds. Involved in the glucuronidation of calcidiol, which is the major circulating form of vitamin D3 essential for the regulation of calcium and phosphate homeostasis. Also glucuronidates the biologically active form of vitamin D3, calcitriol, probably leading to its biliary transport and intestinal reabsorption. Involved in the glucuronidation of arachidonic acid (AA) and AA-derived eicosanoids including 15-HETE, 20-HETE and PGB1. This chain is UDP-glucuronosyltransferase 1A4 (Ugt1a4), found in Oryctolagus cuniculus (Rabbit).